A 515-amino-acid chain; its full sequence is 2-isopropylmalate synthase (515 aa).

A Pyruvate carboxyltransferase domain is found at 5 to 267 (VIIFDTTLRD…HTNLKHDEIH (263 aa)). 4 residues coordinate Mn(2+): aspartate 14, histidine 202, histidine 204, and asparagine 238. Residues 392 to 515 (KLNYLSVQSG…EIKQKKVETV (124 aa)) form a regulatory domain region.

It belongs to the alpha-IPM synthase/homocitrate synthase family. LeuA type 1 subfamily. In terms of assembly, homodimer. Requires Mn(2+) as cofactor.

The protein resides in the cytoplasm. The enzyme catalyses 3-methyl-2-oxobutanoate + acetyl-CoA + H2O = (2S)-2-isopropylmalate + CoA + H(+). The protein operates within amino-acid biosynthesis; L-leucine biosynthesis; L-leucine from 3-methyl-2-oxobutanoate: step 1/4. In terms of biological role, catalyzes the condensation of the acetyl group of acetyl-CoA with 3-methyl-2-oxobutanoate (2-ketoisovalerate) to form 3-carboxy-3-hydroxy-4-methylpentanoate (2-isopropylmalate). In Aliivibrio fischeri (strain MJ11) (Vibrio fischeri), this protein is 2-isopropylmalate synthase.